The primary structure comprises 194 residues: UPF0301 protein BQ03640 (194 aa).

Belongs to the UPF0301 (AlgH) family.

This Bartonella quintana (strain Toulouse) (Rochalimaea quintana) protein is UPF0301 protein BQ03640.